We begin with the raw amino-acid sequence, 211 residues long: Peptide methionine sulfoxide reductase MsrA (211 aa).

Cys-52 is a catalytic residue.

This sequence belongs to the MsrA Met sulfoxide reductase family.

It catalyses the reaction L-methionyl-[protein] + [thioredoxin]-disulfide + H2O = L-methionyl-(S)-S-oxide-[protein] + [thioredoxin]-dithiol. The catalysed reaction is [thioredoxin]-disulfide + L-methionine + H2O = L-methionine (S)-S-oxide + [thioredoxin]-dithiol. Its function is as follows. Has an important function as a repair enzyme for proteins that have been inactivated by oxidation. Catalyzes the reversible oxidation-reduction of methionine sulfoxide in proteins to methionine. This chain is Peptide methionine sulfoxide reductase MsrA, found in Photobacterium profundum (strain SS9).